A 342-amino-acid polypeptide reads, in one-letter code: L-threonine 3-dehydrogenase (342 aa).

Cys-38 lines the Zn(2+) pocket. Active-site charge relay system residues include Thr-40 and His-43. Residues His-63, Glu-64, Cys-93, Cys-96, Cys-99, and Cys-107 each contribute to the Zn(2+) site. Residues Ile-175, Asp-195, Arg-200, 262–264 (LGI), and 286–287 (IY) contribute to the NAD(+) site.

The protein belongs to the zinc-containing alcohol dehydrogenase family. Homotetramer. It depends on Zn(2+) as a cofactor.

The protein localises to the cytoplasm. It catalyses the reaction L-threonine + NAD(+) = (2S)-2-amino-3-oxobutanoate + NADH + H(+). Its pathway is amino-acid degradation; L-threonine degradation via oxydo-reductase pathway; glycine from L-threonine: step 1/2. Catalyzes the NAD(+)-dependent oxidation of L-threonine to 2-amino-3-ketobutyrate. This Burkholderia vietnamiensis (strain G4 / LMG 22486) (Burkholderia cepacia (strain R1808)) protein is L-threonine 3-dehydrogenase.